A 278-amino-acid chain; its full sequence is uncharacterized protein (278 aa).

The protein localises to the cytoplasm. It localises to the nucleus. In terms of biological role, probable methyltransferase. This is an uncharacterized protein from Schizosaccharomyces pombe (strain 972 / ATCC 24843) (Fission yeast).